The chain runs to 321 residues: MSAGKYLLGTAALVGGVYYYDQYVQPILPRQQHQELAYQTQRVENKGSELNNKLTKKIEEGKKFVNEKTESVTKQVKNSDVYQKLQLNTEDYKKHVEDAVDNDKNVFVVGIQKYIDFVNQLGEVKVQTGTTQYSTVSPNVEVKEKSIFGNWFDKSDNKVDQLKNDADKKINEAKDKAESTKSDFFNWNSKKADELDKKANEAINWTNKQIDYASAEWHKHYEQAKGDWNKALDDLSKQWNDSKKQLNGRFDTEKDRAIKGVEDAKSNFEKLSNDLANDASKNQKLKDAQDHFGKSLENLKLFGDDVYNDFAKRFDDLFNRK.

The protein localises to the secreted. The protein resides in the cell wall. The polypeptide is 37 kDa cell surface protein (CSP37) (Candida albicans (Yeast)).